The chain runs to 885 residues: MPSLNDVRSTFLNYFERNGHRVVESSPLVPRNDPTLMFTNSGMVQFKNLFTGVETRDYKRATTAQKCVRAGGKHNDLDNVGYTARHHTFFEMLGNFSFGDYFKDGAIPFAWELLTKDFGIPKDKLLVTVYHTDDEAADIWKKVAGLSDDRIIRIPTSDNFWQMGPTGPCGPCTEIFYDHGEQIWGGPPGSADEDGDRFIEIWNLVFMQNEQFEDGTMRALDMQSIDTGMGLERIGALLQGKHDNYDTDLMRGLIEASAHATSADPDGPGKVHHRVIADHLRSTSFLIADGVMPSNEGRGYVLRRIMRRAMRHAHMLGAKDPVMHRLVPALVREMGAAYPELGRAQALIEETLKLEETRFKQTLDRGLRLLDDELAKLPEGANLPGEAAFKLYDTYGFPLDLTQDALREKGRAVDTAGFDSAMAEQKAKARAAWAGSGETKDAAIWFDIAEEHGATEFLGYDTEISEGQVLALVQDGAAVEEAGEGQQVQIVVNQTPFYGEAGGQVGDTGLIKTETGAARVTDTKKTGGVFIHIAEVTLGTIQRGQGAQLSVDHDRRSAIRANHSATHLLHEALRRALGEHVAQRGSLNAPDRLRFDFSHAKAMTPEELAQVEREVNDFIRQNSPVETRIMTPDDARALGAQALFGEKYGDEVRVVSMGELPGSGKGTGGQTYSLELCGGTHVARTGDIGMFALTSETASAAGIRRIEALTGQAAMDELRRVDGELNEIAGIVKAQAGDVVSKVRALADERKALANEVAQLKRQLAMGGGSEDKPREINGIKLIARRVEGVSGKELGPLVDEMKSRLGSGAVVVLAEADGKATVAAGVTPDLTGRISAVELVQTATAALGGKGGGGRPDRAQGGAPSLAAADSAISAVETLIGEKA.

Residues His563, His567, Cys677, and His681 each contribute to the Zn(2+) site. Residues 848–868 (LGGKGGGGRPDRAQGGAPSLA) are disordered.

It belongs to the class-II aminoacyl-tRNA synthetase family. The cofactor is Zn(2+).

Its subcellular location is the cytoplasm. The catalysed reaction is tRNA(Ala) + L-alanine + ATP = L-alanyl-tRNA(Ala) + AMP + diphosphate. Functionally, catalyzes the attachment of alanine to tRNA(Ala) in a two-step reaction: alanine is first activated by ATP to form Ala-AMP and then transferred to the acceptor end of tRNA(Ala). Also edits incorrectly charged Ser-tRNA(Ala) and Gly-tRNA(Ala) via its editing domain. In Paracoccus denitrificans (strain Pd 1222), this protein is Alanine--tRNA ligase.